We begin with the raw amino-acid sequence, 114 residues long: uncharacterized protein (114 aa).

The next 3 helical transmembrane spans lie at proline 38 to isoleucine 60, tyrosine 64 to phenylalanine 86, and serine 91 to tyrosine 113.

The protein resides in the cell membrane. This is an uncharacterized protein from Bacillus subtilis (strain 168).